The following is a 126-amino-acid chain: Fluoride-specific ion channel FluC (126 aa).

4 helical membrane-spanning segments follow: residues 6–26, 36–56, 69–89, and 99–119; these read FVAV…FAVL, YGTL…VGFF, LAIT…SEVV, and WAGL…AFGL. Glycine 76 and threonine 79 together coordinate Na(+).

This sequence belongs to the fluoride channel Fluc/FEX (TC 1.A.43) family.

It is found in the cell inner membrane. It catalyses the reaction fluoride(in) = fluoride(out). With respect to regulation, na(+) is not transported, but it plays an essential structural role and its presence is essential for fluoride channel function. In terms of biological role, fluoride-specific ion channel. Important for reducing fluoride concentration in the cell, thus reducing its toxicity. In Cupriavidus necator (strain ATCC 17699 / DSM 428 / KCTC 22496 / NCIMB 10442 / H16 / Stanier 337) (Ralstonia eutropha), this protein is Fluoride-specific ion channel FluC.